Here is a 363-residue protein sequence, read N- to C-terminus: Phosphoserine aminotransferase (363 aa).

Position 42 (Arg-42) interacts with L-glutamate. Pyridoxal 5'-phosphate contacts are provided by residues 76–77, Trp-101, Thr-151, Asp-170, and Gln-193; that span reads AS. Lys-194 is modified (N6-(pyridoxal phosphate)lysine). 234 to 235 serves as a coordination point for pyridoxal 5'-phosphate; that stretch reads NT.

The protein belongs to the class-V pyridoxal-phosphate-dependent aminotransferase family. SerC subfamily. In terms of assembly, homodimer. Pyridoxal 5'-phosphate is required as a cofactor.

It localises to the cytoplasm. The enzyme catalyses O-phospho-L-serine + 2-oxoglutarate = 3-phosphooxypyruvate + L-glutamate. It carries out the reaction 4-(phosphooxy)-L-threonine + 2-oxoglutarate = (R)-3-hydroxy-2-oxo-4-phosphooxybutanoate + L-glutamate. Its pathway is amino-acid biosynthesis; L-serine biosynthesis; L-serine from 3-phospho-D-glycerate: step 2/3. Functionally, catalyzes the reversible conversion of 3-phosphohydroxypyruvate to phosphoserine and of 3-hydroxy-2-oxo-4-phosphonooxybutanoate to phosphohydroxythreonine. The protein is Phosphoserine aminotransferase of Listeria innocua serovar 6a (strain ATCC BAA-680 / CLIP 11262).